We begin with the raw amino-acid sequence, 183 residues long: MSKMAQVNGDLPAVNSATAQHLLDIPVIHDGVVAFRNNPLGKKSIAIGDSAYQTFAAPLLPYLARPWGYLRPYAEKADALGDQTLTKVEERVPVIKKPTEELYAGAKGIIALPIRTGFEAKDHVFKTYAQEKKKVGGENLVTYGKAIVSTTLITTSEIIIWVGDVMHYKKEEAKDIVNEKVNN.

The protein belongs to the perilipin family.

It localises to the lipid droplet. Its function is as follows. Lipid droplet coating protein that regulates lipid metabolism, appressorial turgor pressure, and virulence. Appressorial turgor pressure is important for the mechanical penetration of the host cuticle during infection. In Colletotrichum gloeosporioides (Anthracnose fungus), this protein is Lipid droplet coating protein Cap20 (Cap20).